A 272-amino-acid polypeptide reads, in one-letter code: Proteasome assembly chaperone 1 (272 aa).

It belongs to the PSMG1 family. Forms a heterodimer with psmg2.

Its function is as follows. Chaperone protein which promotes assembly of the 20S proteasome as part of a heterodimer with psmg2. The chain is Proteasome assembly chaperone 1 (psmG1) from Dictyostelium discoideum (Social amoeba).